A 172-amino-acid polypeptide reads, in one-letter code: CD-NTase-associated protein 7 (172 aa).

The interval 141–172 (AQSPGINGYLENDKTYSAGGRSLTRTSVRNFV) is required for binding to CdnC and to confer phage immunity.

It belongs to the bacterial HORMA family. HORMA1 subfamily. In terms of assembly, forms complexes with CdnC with 1:1 and 2:2 stoichimetry, and a 1:1:6 CdnC:Cap7:Cap6 complex.

Functionally, sensor protein of a CBASS antivirus system. CBASS (cyclic oligonucleotide-based antiphage signaling system) provides immunity against bacteriophage. The CD-NTase protein synthesizes cyclic nucleotides in response to infection; these serve as specific second messenger signals. The signals activate a diverse range of effectors, leading to bacterial cell death and thus abortive phage infection. A type III-C(AAA) CBASS system. Binds to a closure peptide (consensus His-Xaa-Xaa-Ile-Leu-Leu-Thr), which allows it to activate CdnC for second messenger synthesis. Its function is as follows. Protects E.coli strain JP313 against bacteriophage lambda cI- infection. When the cdnC-cap7-cap6-nucC operon is transformed into a susceptible strain it confers bacteriophage immunity. Mutations in the sensor (Cap7 also called HORMA) or effector proteins (CdnC, NucC) but not the disassembly protein (Cap6 also called Trip13) no longer confer immunity. The presence of the intact operon leads to culture collapse and cell death, which occurs before the phage has finished its replication cycle, thus protecting non-infected bacteria by aborting the phage infection and preventing its propagation. This is CD-NTase-associated protein 7 from Escherichia coli (strain MS 115-1).